Here is a 369-residue protein sequence, read N- to C-terminus: MPRPIQATIHTAALQQNLARARAAAPDARVWAVVKANAYGHGIERAFEGLRGADGFALLDLGEAERVRQLGWRGPILLLEGVFEPRDLELCSRLSLWHAVHCDEQIDWLSAHKTHAPHRVFLKMNSGMNRLGFPPARYRAAWARLNALPQVDEISFMTHFSDADGPRGIAHQIDAFCTATQDLPGERTVSNSAATLRHAGGDARVRGDWVRAGIVLYGSAADHPEHTAAHWGLAPTMTLSARIIGTQQLQAGDTVGYGSSFTADRPMTIGVVACGYADGYPRHAPTGTPVLVNGVRTRTVGRVSMDMITVDLTPLHEAGVEAGVGSEATLWGRASCGAVLCIDEVAQAAGTVGYELMCALAPRVPVVVD.

Lys35 functions as the Proton acceptor; specific for D-alanine in the catalytic mechanism. N6-(pyridoxal phosphate)lysine is present on Lys35. Residue Arg130 coordinates substrate. Tyr257 (proton acceptor; specific for L-alanine) is an active-site residue. Met305 lines the substrate pocket.

This sequence belongs to the alanine racemase family. Requires pyridoxal 5'-phosphate as cofactor.

The enzyme catalyses L-alanine = D-alanine. Its pathway is amino-acid biosynthesis; D-alanine biosynthesis; D-alanine from L-alanine: step 1/1. Its function is as follows. Catalyzes the interconversion of L-alanine and D-alanine. May also act on other amino acids. The sequence is that of Alanine racemase (alr) from Paracidovorax citrulli (strain AAC00-1) (Acidovorax citrulli).